The sequence spans 317 residues: Ribosomal protein L11 methyltransferase (317 aa).

Positions 158, 179, 201, and 244 each coordinate S-adenosyl-L-methionine.

It belongs to the methyltransferase superfamily. PrmA family.

The protein localises to the cytoplasm. The catalysed reaction is L-lysyl-[protein] + 3 S-adenosyl-L-methionine = N(6),N(6),N(6)-trimethyl-L-lysyl-[protein] + 3 S-adenosyl-L-homocysteine + 3 H(+). Its function is as follows. Methylates ribosomal protein L11. This Streptococcus pyogenes serotype M4 (strain MGAS10750) protein is Ribosomal protein L11 methyltransferase.